The following is a 158-amino-acid chain: 3-hydroxyacyl-[acyl-carrier-protein] dehydratase FabZ (158 aa).

The active site involves H62.

The protein belongs to the thioester dehydratase family. FabZ subfamily.

The protein localises to the cytoplasm. It carries out the reaction a (3R)-hydroxyacyl-[ACP] = a (2E)-enoyl-[ACP] + H2O. Its function is as follows. Involved in unsaturated fatty acids biosynthesis. Catalyzes the dehydration of short chain beta-hydroxyacyl-ACPs and long chain saturated and unsaturated beta-hydroxyacyl-ACPs. This is 3-hydroxyacyl-[acyl-carrier-protein] dehydratase FabZ from Novosphingobium aromaticivorans (strain ATCC 700278 / DSM 12444 / CCUG 56034 / CIP 105152 / NBRC 16084 / F199).